A 150-amino-acid chain; its full sequence is Arginine repressor (150 aa).

The protein belongs to the ArgR family.

The protein localises to the cytoplasm. It functions in the pathway amino-acid biosynthesis; L-arginine biosynthesis [regulation]. Functionally, regulates arginine biosynthesis genes. This chain is Arginine repressor, found in Clostridium beijerinckii (strain ATCC 51743 / NCIMB 8052) (Clostridium acetobutylicum).